The following is a 467-amino-acid chain: Protection of telomeres protein 1a (467 aa).

This sequence belongs to the telombin family. As to quaternary structure, component of the telomerase holoenzyme complex at least composed of TERT, CBF5 and POT1a. The RNA molecule associated to the telomerase complex, and providing a template for telomeric DNA synthesis, is most likely TR and not TER1 as described previously. Interacts with the N-terminal part of TERT. Interacts with CBF5. Interacts with CTC1 and STN1. Does not interact with TEN1. As to expression, expressed in roots, rosette leaves, cauline leaves, stems and flowers.

Its subcellular location is the nucleus. The protein resides in the chromosome. It is found in the telomere. It localises to the nucleolus. The protein localises to the cytoplasm. Functionally, component of the telomerase ribonucleoprotein (RNP) complex that is essential for the positive regulation of telomere length. Binds RNA non-specifically. Binds specifically single-stranded telomeric DNA. Not required to recruit telomerase to telomeres, but stimulates TER1 RNP repeat addition processivity. The sequence is that of Protection of telomeres protein 1a from Arabidopsis thaliana (Mouse-ear cress).